Here is a 736-residue protein sequence, read N- to C-terminus: MSKPSNTPPLPKDGERNILITSALPYVNNVPHLGNIIGCVLSADVYARYCRLKNYNCIYICGTDEYGTATETKALSEGCTPKEICDKYHEIHKEIYEWFNISFDKFGRTSTNSQTEIAQDIFNKIKDNGYTLTQEIEQLYCEQTCKMFLADRFVEGTCPHCKFEDARGDQCDGCSKLLNPTELINPRCKVCSKPPVIKSTKHIFIDLPQLQQQVDQFVETNSKGGNWSENSIAITNTWVKGELKPRCITRDLKWGTPVPMEEFKDKVFYVWFDAPIGYISITAEYTNEWEKWWKNPENVKLVQFMGKDNVPFHTVIFPASLIGSKDNYTLLNNLSTTEFLNYETGKFSKSRNTGVFGDGAKATGIPSEVWRFYLLNNRPESSDSIFSWDDFNFKNNELLNNFGNLVNRVLKMLNTNAAFNGVVPKIGELNEVDKKLVQEVDEHLVQYFQKLEEISLKEGLKIAMSISKLGNTYMQDNKPWDLSGKDNERCGQVLAILINLIKLLSTLLEPYIPSLTDKVHQQLNVEPTKYSTHFDINAIPAGHEISKEILPLVKKIEADDLKKWRTKFSGIGPEFPIDMKIATVLEVNDHPSAENLYVIKLSLGGDQTKTAVSGIKANFEKSQLIGKKLAVVLNLKPSKFKGVLSEAMILVADDGQATKESLSFLVPSNPQSIEAGSKIAGKGMSIKPKPTIDYQKEFLHYDLTCIDKIISYNKSQLFINQNEPLVSEKIGNGKVR.

A 'HIGH' region motif is present at residues 25–35 (PYVNNVPHLGN). The short motif at 346-350 (KFSKS) is the 'KMSKS' region element. K349 provides a ligand contact to ATP. The tRNA-binding domain occupies 573–680 (PEFPIDMKIA…QSIEAGSKIA (108 aa)).

This sequence belongs to the class-I aminoacyl-tRNA synthetase family.

It localises to the cytoplasm. It carries out the reaction tRNA(Met) + L-methionine + ATP = L-methionyl-tRNA(Met) + AMP + diphosphate. This chain is Probable methionine--tRNA ligase, cytoplasmic (metS), found in Dictyostelium discoideum (Social amoeba).